Consider the following 222-residue polypeptide: Capsular polysaccharide type 5 biosynthesis protein cap5A (222 aa).

The next 2 helical transmembrane spans lie at 20–40 (ILII…FFVL) and 172–192 (VVNL…YIFF).

Belongs to the CpsC/CapA family.

It localises to the cell membrane. Functionally, required for the biosynthesis of type 5 capsular polysaccharide (Cap5/CP5). Might act as the chain-length regulator. The polypeptide is Capsular polysaccharide type 5 biosynthesis protein cap5A (cap5A) (Staphylococcus aureus (strain Newman)).